Here is a 161-residue protein sequence, read N- to C-terminus: MSDEEHQFESKADAGASKTYPQQAGTIRKNGYIVIKNRPCKVVEVSTSKTGKHGHAKCHFVAIDIFTSKKLEEVYVPSSHNCDVPHVNRTDYQLIDISEDGFVSLLTENGNTKDDLKLPTDDSLLTQIKDGFAEGKDLVVSVMSAMGEEQICALKDIGGKN.

Basic and acidic residues predominate over residues 1-12 (MSDEEHQFESKA). Positions 1–21 (MSDEEHQFESKADAGASKTYP) are disordered. At Lys52 the chain carries Hypusine.

It belongs to the eIF-5A family. Lys-52 undergoes hypusination, a unique post-translational modification that consists in the addition of a butylamino group from spermidine to lysine side chain, leading to the formation of the unusual amino acid hypusine. eIF-5As are the only known proteins to undergo this modification, which is essential for their function.

Translation factor that promotes translation elongation and termination, particularly upon ribosome stalling at specific amino acid sequence contexts. Binds between the exit (E) and peptidyl (P) site of the ribosome and promotes rescue of stalled ribosome: specifically required for efficient translation of polyproline-containing peptides as well as other motifs that stall the ribosome. Acts as a ribosome quality control (RQC) cofactor by joining the RQC complex to facilitate peptidyl transfer during CAT tailing step. This chain is Eukaryotic translation initiation factor 5A-1, found in Medicago sativa (Alfalfa).